Here is a 650-residue protein sequence, read N- to C-terminus: Chaperone protein HtpG (650 aa).

An a; substrate-binding region spans residues 1–356; it reads MSTRVETLEF…THDLSLNISR (356 aa). The segment at 222–245 is disordered; that stretch reads AKDRDSNDDGTAESGAGAENAGDR. Residues 357–572 form a b region; the sequence is EILQQDRRIQ…TFDMTPALEK (216 aa). The c stretch occupies residues 573-650; it reads MYRAMGHEMP…LLAERLAEAL (78 aa).

It belongs to the heat shock protein 90 family. In terms of assembly, homodimer.

Its subcellular location is the cytoplasm. Functionally, molecular chaperone. Has ATPase activity. The polypeptide is Chaperone protein HtpG (Frankia casuarinae (strain DSM 45818 / CECT 9043 / HFP020203 / CcI3)).